The chain runs to 191 residues: Elongation factor P 1 (191 aa).

The protein belongs to the elongation factor P family.

It is found in the cytoplasm. The protein operates within protein biosynthesis; polypeptide chain elongation. Involved in peptide bond synthesis. Stimulates efficient translation and peptide-bond synthesis on native or reconstituted 70S ribosomes in vitro. Probably functions indirectly by altering the affinity of the ribosome for aminoacyl-tRNA, thus increasing their reactivity as acceptors for peptidyl transferase. The chain is Elongation factor P 1 from Lactobacillus acidophilus (strain ATCC 700396 / NCK56 / N2 / NCFM).